The chain runs to 245 residues: Ribonuclease 3 (245 aa).

Residues 19–148 form the RNase III domain; sequence FKVFQEKIGI…FIGALYLDQG (130 aa). Residue E61 coordinates Mg(2+). The active site involves D65. Residues D134 and E137 each contribute to the Mg(2+) site. The active site involves E137. Residues 174–243 enclose the DRBM domain; the sequence is DYKSQLQELI…AAEALKKLKE (70 aa).

It belongs to the ribonuclease III family. Homodimer. Requires Mg(2+) as cofactor.

It is found in the cytoplasm. The enzyme catalyses Endonucleolytic cleavage to 5'-phosphomonoester.. In terms of biological role, digests double-stranded RNA. Involved in the processing of primary rRNA transcript to yield the immediate precursors to the large and small rRNAs (23S and 16S). Processes some mRNAs, and tRNAs when they are encoded in the rRNA operon. Processes pre-crRNA and tracrRNA of type II CRISPR loci if present in the organism. The chain is Ribonuclease 3 from Bacillus cereus (strain ATCC 14579 / DSM 31 / CCUG 7414 / JCM 2152 / NBRC 15305 / NCIMB 9373 / NCTC 2599 / NRRL B-3711).